We begin with the raw amino-acid sequence, 325 residues long: 5-dehydro-2-deoxygluconokinase (325 aa).

This sequence belongs to the carbohydrate kinase PfkB family.

It carries out the reaction 5-dehydro-2-deoxy-D-gluconate + ATP = 6-phospho-5-dehydro-2-deoxy-D-gluconate + ADP + H(+). It functions in the pathway polyol metabolism; myo-inositol degradation into acetyl-CoA; acetyl-CoA from myo-inositol: step 5/7. In terms of biological role, catalyzes the phosphorylation of 5-dehydro-2-deoxy-D-gluconate (2-deoxy-5-keto-D-gluconate or DKG) to 6-phospho-5-dehydro-2-deoxy-D-gluconate (DKGP). In Bacillus licheniformis (strain ATCC 14580 / DSM 13 / JCM 2505 / CCUG 7422 / NBRC 12200 / NCIMB 9375 / NCTC 10341 / NRRL NRS-1264 / Gibson 46), this protein is 5-dehydro-2-deoxygluconokinase.